The sequence spans 352 residues: MDYQVSSPTYDIDYYTSEPCQKVNVKQIAARLLPPLYSLVFIFGFVGNILVVLILINCKRLKSMTDIYLLNLAISDLFFLLTVPFWAHYAAAQWDFGNTMCQLLTGLYFIGFFSGIFFIILLTIDRYLAIVHAVFALKARTVTFGVVTSVITWVVAVFASLPGIIFTRSQREGLHYTCSSHFPYSQYQFWKNFQTLKIVILGLVLPLLVMVICYSGILKTLLRCRNEKKRHRAVRLIFTIMIVYFLFWAPYNIVLLLNTFQEFFGLNNCSSSNRLDQAMQVTETLGMTHCCINPIIYAFVGEKFRNYLLVFFQKHIAKRFCKCCSIFQQEAPERASSVYTRSTGEQEISVGL.

The Extracellular portion of the chain corresponds to 1–30 (MDYQVSSPTYDIDYYTSEPCQKVNVKQIAA). Y3 bears the Sulfotyrosine mark. Residues S6 and S7 are each glycosylated (O-linked (GalNAc...) serine). Sulfotyrosine is present on residues Y10, Y14, and Y15. Intrachain disulfides connect C20–C269 and C101–C178. A helical transmembrane segment spans residues 31-58 (RLLPPLYSLVFIFGFVGNILVVLILINC). Residues 59–68 (KRLKSMTDIY) are Cytoplasmic-facing. The chain crosses the membrane as a helical span at residues 69 to 89 (LLNLAISDLFFLLTVPFWAHY). Over 90-102 (AAAQWDFGNTMCQ) the chain is Extracellular. Residues 103–124 (LLTGLYFIGFFSGIFFIILLTI) form a helical membrane-spanning segment. Topologically, residues 125–141 (DRYLAIVHAVFALKART) are cytoplasmic. Residues 142–166 (VTFGVVTSVITWVVAVFASLPGIIF) traverse the membrane as a helical segment. The Extracellular portion of the chain corresponds to 167–198 (TRSQREGLHYTCSSHFPYSQYQFWKNFQTLKI). A helical transmembrane segment spans residues 199–218 (VILGLVLPLLVMVICYSGIL). Residues 219 to 235 (KTLLRCRNEKKRHRAVR) are Cytoplasmic-facing. Residues 236-260 (LIFTIMIVYFLFWAPYNIVLLLNTF) form a helical membrane-spanning segment. Topologically, residues 261-277 (QEFFGLNNCSSSNRLDQ) are extracellular. The chain crosses the membrane as a helical span at residues 278–301 (AMQVTETLGMTHCCINPIIYAFVG). Topologically, residues 302-352 (EKFRNYLLVFFQKHIAKRFCKCCSIFQQEAPERASSVYTRSTGEQEISVGL) are cytoplasmic. S-palmitoyl cysteine attachment occurs at residues C321, C323, and C324. A phosphoserine; by BARK1 mark is found at S336, S337, S342, and S349.

Belongs to the G-protein coupled receptor 1 family. Interacts with PRAF2. Efficient ligand binding to CCL3/MIP-1alpha and CCL4/MIP-1beta requires sulfation, O-glycosylation and sialic acid modifications. Glycosylation on Ser-6 is required for efficient binding of CCL4. Interacts with GRK2. Interacts with ARRB1 and ARRB2. Interacts with CNIH4. Interacts with S100A4; this interaction stimulates T-lymphocyte chemotaxis. Sulfated on at least 2 of the N-terminal tyrosines. Sulfation is required for efficient binding of the chemokines, CCL3 and CCL4. In terms of processing, palmitoylation in the C-terminal is important for cell surface expression. Post-translationally, phosphorylation on serine residues in the C-terminal is stimulated by binding CC chemokines especially by APO-RANTES. O-glycosylated, but not N-glycosylated. Ser-6 appears to be the major site even if Ser-7 may be also O-glycosylated. Also sialylated glycans present which contribute to chemokine binding. Thr-16 and Ser-17 may also be glycosylated and, if so, with small moieties such as a T-antigen.

Its subcellular location is the cell membrane. Receptor for a number of inflammatory CC-chemokines including CCL3/MIP-1-alpha, CCL4/MIP-1-beta and RANTES and subsequently transduces a signal by increasing the intracellular calcium ion level. May play a role in the control of granulocytic lineage proliferation or differentiation. Participates in T-lymphocyte migration to the infection site by acting as a chemotactic receptor. The protein is C-C chemokine receptor type 5 (CCR5) of Semnopithecus entellus (Northern plains gray langur).